The primary structure comprises 394 residues: Bone morphogenetic protein 2 (394 aa).

The N-terminal stretch at 1-19 (MVAGTRCLLVLLLPQVLLG) is a signal peptide. A propeptide spans 20 to 280 (GAAGLIPELG…GHPLHKREKR (261 aa)) (cleaved by PCSK5). Ser86 bears the Phosphoserine mark. N-linked (GlcNAc...) asparagine glycans are attached at residues Asn134, Asn162, and Asn198. Residues 269–291 (GKGHPLHKREKRQAKHKQRKRLK) are disordered. Residues 272–291 (HPLHKREKRQAKHKQRKRLK) are compositionally biased toward basic residues. 3 cysteine pairs are disulfide-bonded: Cys294-Cys359, Cys323-Cys391, and Cys327-Cys393. The N-linked (GlcNAc...) asparagine glycan is linked to Asn336.

The protein belongs to the TGF-beta family. Homodimer; disulfide-linked. Interacts with SOSTDC1. Interacts with GREM2, RGMA, RGMB and RGMC. Interacts with ASPN. Interacts with MAFP5. Interacts with FBN1 (via N-terminal domain) and FBN2. Interacts with type I receptor BMPR1A. Interacts with type II receptor BMPR2. Interacts with SCUBE3. Interacts with TNFAIP6 (primarily via Link domain); this interaction is inhibited by hyaluronan. Interacts with ERFE. Interacts with BMPR1A/ALK3; the interaction may induce HAMP expression. Forms heterodimers with BMP6 in vitro; the heterodimer then binds to its receptor BMPR1A /ALK3 and may induce HAMP expression. Interacts with TGFBR3.

The protein resides in the secreted. Functionally, growth factor of the TGF-beta superfamily that plays essential roles in many developmental processes, including cardiogenesis, neurogenesis, and osteogenesis. Induces cartilage and bone formation. Initiates the canonical BMP signaling cascade by associating with type I receptor BMPR1A and type II receptor BMPR2. Once all three components are bound together in a complex at the cell surface, BMPR2 phosphorylates and activates BMPR1A. In turn, BMPR1A propagates signal by phosphorylating SMAD1/5/8 that travel to the nucleus and act as activators and repressors of transcription of target genes. Also acts to promote expression of HAMP, via the interaction with its receptor BMPR1A/ALK3. Can also signal through non-canonical pathways such as ERK/MAP kinase signaling cascade that regulates osteoblast differentiation. Also stimulates the differentiation of myoblasts into osteoblasts via the EIF2AK3-EIF2A-ATF4 pathway by stimulating EIF2A phosphorylation which leads to increased expression of ATF4 which plays a central role in osteoblast differentiation. Acts as a positive regulator of odontoblast differentiation during mesenchymal tooth germ formation, expression is repressed during the bell stage by MSX1-mediated inhibition of CTNNB1 signaling. The chain is Bone morphogenetic protein 2 (Bmp2) from Mus musculus (Mouse).